We begin with the raw amino-acid sequence, 66 residues long: ATP synthase F(0) complex subunit 8 (66 aa).

An N-formylmethionine modification is found at M1. The chain crosses the membrane as a helical span at residues 8–24 (TWLTMILSMFLTLFIIF). K54 carries the N6-acetyllysine; alternate modification. An N6-succinyllysine; alternate modification is found at K54. K57 is modified (N6-acetyllysine).

It belongs to the ATPase protein 8 family. In terms of assembly, component of the ATP synthase complex composed at least of ATP5F1A/subunit alpha, ATP5F1B/subunit beta, ATP5MC1/subunit c (homooctomer), MT-ATP6/subunit a, MT-ATP8/subunit 8, ATP5ME/subunit e, ATP5MF/subunit f, ATP5MG/subunit g, ATP5MK/subunit k, ATP5MJ/subunit j, ATP5F1C/subunit gamma, ATP5F1D/subunit delta, ATP5F1E/subunit epsilon, ATP5PF/subunit F6, ATP5PB/subunit b, ATP5PD/subunit d, ATP5PO/subunit OSCP. ATP synthase complex consists of a soluble F(1) head domain (subunits alpha(3) and beta(3)) - the catalytic core - and a membrane F(0) domain - the membrane proton channel (subunits c, a, 8, e, f, g, k and j). These two domains are linked by a central stalk (subunits gamma, delta, and epsilon) rotating inside the F1 region and a stationary peripheral stalk (subunits F6, b, d, and OSCP). Interacts with PRICKLE3.

The protein resides in the mitochondrion membrane. In terms of biological role, subunit 8, of the mitochondrial membrane ATP synthase complex (F(1)F(0) ATP synthase or Complex V) that produces ATP from ADP in the presence of a proton gradient across the membrane which is generated by electron transport complexes of the respiratory chain. ATP synthase complex consist of a soluble F(1) head domain - the catalytic core - and a membrane F(1) domain - the membrane proton channel. These two domains are linked by a central stalk rotating inside the F(1) region and a stationary peripheral stalk. During catalysis, ATP synthesis in the catalytic domain of F(1) is coupled via a rotary mechanism of the central stalk subunits to proton translocation. In vivo, can only synthesize ATP although its ATP hydrolase activity can be activated artificially in vitro. Part of the complex F(0) domain. The polypeptide is ATP synthase F(0) complex subunit 8 (Bos taurus (Bovine)).